The primary structure comprises 453 residues: Na(+)/H(+) antiporter NhaA (453 aa).

A run of 11 helical transmembrane segments spans residues 27–47 (FLHI…SALI), 78–98 (LHFW…GMEI), 114–134 (ILPI…YFIF), 143–163 (GWAV…ALLG), 172–192 (IILL…IAFF), 201–221 (GLLI…IGLA), 222–242 (SAWL…VTGV), 316–336 (PWVA…VSFA), 346–366 (FLIV…GIIT), 385–405 (WAGI…SIFV), and 421–441 (IGVL…GFIY).

The protein belongs to the NhaA Na(+)/H(+) (TC 2.A.33) antiporter family.

The protein resides in the cell inner membrane. The catalysed reaction is Na(+)(in) + 2 H(+)(out) = Na(+)(out) + 2 H(+)(in). In terms of biological role, na(+)/H(+) antiporter that extrudes sodium in exchange for external protons. The polypeptide is Na(+)/H(+) antiporter NhaA (Bartonella tribocorum (strain CIP 105476 / IBS 506)).